The following is a 250-amino-acid chain: 26 kDa periplasmic immunogenic protein (250 aa).

The signal sequence occupies residues M1 to A28.

It is found in the periplasm. In Brucella melitensis biotype 1 (strain ATCC 23456 / CCUG 17765 / NCTC 10094 / 16M), this protein is 26 kDa periplasmic immunogenic protein (bp26).